The sequence spans 145 residues: 5-hydroxymethyl-dUMP N-hydrolase (145 aa).

The 5-hydroxymethyl-dUMP site is built by Gly7, Ile9, Arg10, Gly11, Ser79, Gly81, Glu85, and Ser109.

It belongs to the 2'-deoxynucleoside 5'-phosphate N-hydrolase 1 family. As to quaternary structure, monomer and homodimer.

It localises to the cytoplasm. Its subcellular location is the nucleus. It carries out the reaction 5-hydroxymethyl-dUMP + H2O = 5-hydroxymethyluracil + 2-deoxy-D-ribose 5-phosphate. Its function is as follows. Part of a nucleotide salvage pathway that eliminates epigenetically modified 5-hydroxymethyl-dCMP (hmdCMP) in a two-step process entailing deamination to cytotoxic 5-hydroxymethyl-dUMP (hmdUMP), followed by its hydrolysis into 5-hydroxymethyluracil (hmU) and 2-deoxy-D-ribose 5-phosphate (deoxyribosephosphate). Catalyzes the second step in that pathway, the hydrolysis of the N-glycosidic bond in hmdUMP, degrading this cytotoxic nucleotide to avoid its genomic integration. This chain is 5-hydroxymethyl-dUMP N-hydrolase, found in Esox lucius (Northern pike).